The following is a 171-amino-acid chain: Co-chaperone protein HscB (171 aa).

The J domain maps to 2–74; sequence DYFTLFGLPA…LTRAEYLLSL (73 aa).

It belongs to the HscB family. Interacts with HscA and stimulates its ATPase activity. Interacts with IscU.

Its function is as follows. Co-chaperone involved in the maturation of iron-sulfur cluster-containing proteins. Seems to help targeting proteins to be folded toward HscA. This Klebsiella pneumoniae (strain 342) protein is Co-chaperone protein HscB.